The following is a 662-amino-acid chain: ATP-dependent RNA helicase DDX3X (662 aa).

S2 is modified (N-acetylserine). Residues 2-139 (SHVAVENALG…KSDEDDWSKP (138 aa)) form a required for TBK1 and IKBKE-dependent IFNB1 activation region. The Nuclear export signal motif lies at 12 to 21 (LDQQFAGLDL). The interval 19–144 (LDLNSSDNQS…DWSKPLPPSE (126 aa)) is disordered. The segment covering 21-34 (LNSSDNQSGGSTAS) has biased composition (polar residues). The segment at 38-44 (YIPPHLR) is interaction with EIF4E. The span at 44–68 (RNREATKGFYDKDSSGWSSSKDKDA) shows a compositional bias: basic and acidic residues. Residue K55 is modified to N6-acetyllysine. The span at 70 to 89 (SSFGSRSDSRGKSSFFSDRG) shows a compositional bias: low complexity. Positions 81–90 (KSSFFSDRGS) are interaction with VACV protein K7. Phosphoserine is present on residues S82, S86, and S90. The involved in binding to RNA G-quadruplex stretch occupies residues 88 to 123 (RGSGSRGRFDDRGRSDYDGIGSRGDRSGFGKFERGG). Residues 94–130 (GRFDDRGRSDYDGIGSRGDRSGFGKFERGGNSRWCDK) are compositionally biased toward basic and acidic residues. The interval 100 to 110 (GRSDYDGIGSR) is interaction with IKBKE. Positions 100 to 662 (GRSDYDGIGS…NSQGVDWWGN (563 aa)) are interaction with GSK3B. At R101 the chain carries Omega-N-methylarginine. S102 carries the phosphoserine; by IKKE modification. The residue at position 104 (Y104) is a Phosphotyrosine. R110 carries the omega-N-methylarginine modification. The residue at position 118 (K118) is an N6-acetyllysine. Position 131 is a phosphoserine (S131). An interaction with CHUK region spans residues 139-172 (PLPPSERLEQELFSGGNTGINFEKYDDIPVEATG). Residues 180–208 (ESFSDVEMGEIIMGNIELTRYTRPTPVQK) carry the Q motif motif. A Phosphoserine; by TBK1; in vitro modification is found at S181. S183 is modified (phosphoserine; by TBK1). 200-207 (YTRPTPVQ) is an ATP binding site. The Helicase ATP-binding domain maps to 211–403 (IPIIKEKRDL…RDFLDEYIFL (193 aa)). K215 participates in a covalent cross-link: Glycyl lysine isopeptide (Lys-Gly) (interchain with G-Cter in SUMO2). Residue 224–231 (AQTGSGKT) participates in ATP binding. S240 carries the phosphoserine; by TBK1; in vitro modification. The tract at residues 250-259 (ALRAMKENGR) is involved in stimulation of ATPase activity by DNA and RNA, nucleic acid binding and unwinding and HIV-1 replication. At S269 the chain carries Phosphoserine; by TBK1; in vitro. Residues 347–350 (DEAD) carry the DEAD box motif. The segment at 409-662 (GSTSENITQK…NSQGVDWWGN (254 aa)) is interaction with HCV core protein. A Helicase C-terminal domain is found at 414 to 575 (NITQKVVWVE…EVPSWLENMA (162 aa)). The residue at position 429 (S429) is a Phosphoserine; by CSNK1E and TBK1; in vitro. The residue at position 438 (T438) is a Phosphothreonine; by TBK1; in vitro. A phosphoserine; by TBK1; in vitro mark is found at S442 and S456. Residue T469 is modified to Phosphothreonine; by CSNK1E; in vitro. Position 470 is a phosphoserine; by CSNK1E; in vitro (S470). A Phosphoserine; by TBK1; in vitro modification is found at S520. The tract at residues 536–661 (GNLGLATSFF…YNSQGVDWWG (126 aa)) is interaction with NXF1. T542 bears the Phosphothreonine; by TBK1; in vitro mark. Phosphoserine; by CSNK1E and TBK1; in vitro is present on S543. R592 bears the Omega-N-methylarginine mark. S594, S605, and S612 each carry phosphoserine. Residues 601-634 (DYRQSSGASSSSFSSSRASSSRSGGGGHGSSRGF) form a disordered region. The segment covering 604-622 (QSSGASSSSFSSSRASSSR) has biased composition (low complexity). An omega-N-methylarginine mark is found at R617 and R632. Over residues 623-634 (SGGGGHGSSRGF) the composition is skewed to gly residues.

This sequence belongs to the DEAD box helicase family. DDX3/DED1 subfamily. Homodimer; can bind RNA as a monomer and as a dimer/oligomer. Interacts with TDRD3. Interacts (when phosphorylated at Ser-102) with IRF3; the interaction facilitates the phosphorylation and activation of IRF3 by IKBKE. Directly interacts with XPO1/CRM1. The interaction with XPO1/CMR1 is dependent on the DDX3X nuclear export signal motif and XPO1 interaction with GTPase RAN in its active GTP-bound form. Weakly interacts with TBKBP1/SINTBAD. Directly interacts with TRAF3; this interaction stimulates TRAF3 'Lys-63' ubiquitination. Interacts with CSNK1E in a Wnt-dependent manner; this interaction greatly enhances CSNK1E affinity for ATP, stimulates its kinase activity and promotes CSNK1E-mediated DVL2 phosphorylation. In the presence of RNA, the interaction is decreased. Also interacts with CSNK1D and stimulates its kinase activity. Interacts with TRPV4; this interaction is decreased when the TRPV4 channel is activated, leading to DDX3X relocalization to the nucleus. Interacts with MAP3K14/NIK. Directly interacts with CHUK/IKKA after physiological activation of the TLR7 and TLR8 pathways; this interaction enhances CHUK autophosphorylation. May associate with EIF4F complex, composed of at least EIF4A, EIF4E and EIF4G1/EIF4G3. Directly interacts with EIF4E in an RNA-independent manner; this interaction enhances EIF4E cap-binding ability. Directly interacts with EIF4G1 in an RNA-independent manner. DDX3X competes with EIF4G1 for interaction with EIF4E. Interacts with EIF4A1 and EIF2S1 in an RNA-independent manner. Associates with the eukaryotic translation initiation factor 3 (eIF-3) complex, including with EIF3B and EIF3C subunits. Directly interacts with IKBKE/IKKE; this interaction stimulates IKBKE activating autophosphorylation and is induced upon viral infection. Interacts with TBK1. Interacts with SP1; this interaction potentiates SP1-induced CDKN1A/WAF1/CIP1 transcription. Interacts with GSK3A and GSK3B. Interacts with several death receptors, inclusing FAS, TNFRSF10A and TNFRSF10B. Recruited to TNFRSF10B in the absence of receptor stimulation. When TNFRSF10B is stimulated, further recruited to the receptor and cleaved by caspases. A large proteolytic fragment remains associated with TNFRSF10B. Interacts (via C-terminus) with NXF1/TAP; this interaction may be partly involved in DDX3X nuclear export and in NXF1 localization to stress granules. Identified in an mRNP complex, composed of at least DHX9, DDX3X, ELAVL1, HNRNPU, IGF2BP1/2, ILF3, PABPC1, PCBP2, PTBP2, STAU1, STAU2, SYNCRIP and YBX1. The interaction with IGF2BP1/2 is RNA-dependent. Directly interacts with PABPC1/PABP1 in an RNA-independent manner. This interaction increases in stressed cells and decreases during cell recovery. Interacts (via C-terminus) with MAVS/IPS-1; this interaction occurs rapidly, but transiently after Sendai virus infection. The interaction potentiates MAVS-mediated IFNB induction. Interacts with ERCC6/CBS. Interacts with DHX33 in an RNA-independent manner. Interacts with DDX5 in the cytoplasm; this interaction may be more efficient when both proteins are unphosphorylated. Interacts with RIGI/RIG-1. Interacts with IFIH1/MDA5. Interacts with NCAPH; this interaction may be important for the NCAPH localization at condensing chromosomes during mitosis. Interacts with NLRP3 (via NACHT domain) under inflammasome-activating conditions. Interacts with CAPRIN1. Interacts with HNF4A and NR0B2/SHP in an RNA-independent manner; this interaction disrupts the interaction between HNF4 and NR0B2 that forms inactive heterodimers and enhances the formation of active HNF4 homodimers. Interacts with CREBBP/CBP. Interacts with EP300/p300. Interacts with gamma-tubulin. Interacts with phosphorylated TP53. Directly interacts with RELA/p65; this interaction may trap RELA in the cytoplasm, impairing nuclear relocalization upon TNF activating signals. As to quaternary structure, (Microbial infection) Interacts with hepatitis B virus (HBV) polymerase in the cytoplasm; this interaction may inhibit DDX3X interaction with the IKBKE/TBK1 complex, and hence impair IKBKE/TBK1-mediated increase in IFNB production. In terms of assembly, (Microbial infection) Directly interacts with hepatitis C virus (HCV) core protein in the cytoplasm. (Microbial infection) Interacts with vaccinia virus (VACV) protein K7. As to quaternary structure, (Microbial infection) Interacts with HIV-1 protein Rev. In terms of assembly, (Microbial infection) Interacts with Venezuelan equine encephalitis virus non-structural protein 3. Phosphorylated by TBK1; the phosphorylation is required for the synergistic induction of IFNB mediated by TBK1 and DDX3X. Phosphorylated by IKBKE at Ser-102 after ssRNA viral infection; enhances the induction of INFB promoter by IRF3. The cytoplasmic form is highly phosphorylated in the G1/S phase of the cell cycle and much less at G2/M. Phosphorylation by CSNK1E may inhibit RNA-stimulated ATPase activity. Post-translationally, upon stimulation of death receptors, including TNFRSF10B, recruited to receptors and cleaved by caspases. Proteolytic fragments remain associated with the receptors. This cleavage presumably inactivates DDX3X anti-apoptotic function. In terms of processing, ubiquitinated by RNF39 via 'Lys-48'-linked ubiquitination; leading to proteasomal degradation. As to expression, widely expressed. In testis, expressed in spermatids. Expressed in epidermis and liver (at protein level).

The protein localises to the cell membrane. It localises to the nucleus. Its subcellular location is the cytoplasm. It is found in the stress granule. The protein resides in the inflammasome. The protein localises to the cell projection. It localises to the lamellipodium. Its subcellular location is the cytoskeleton. It is found in the microtubule organizing center. The protein resides in the centrosome. The catalysed reaction is ATP + H2O = ADP + phosphate + H(+). Functionally, multifunctional ATP-dependent RNA helicase. The ATPase activity can be stimulated by various ribo-and deoxynucleic acids indicative for a relaxed substrate specificity. In vitro can unwind partially double-stranded DNA with a preference for 5'-single-stranded DNA overhangs. Binds RNA G-quadruplex (rG4s) structures, including those located in the 5'-UTR of NRAS mRNA. Involved in many cellular processes, which do not necessarily require its ATPase/helicase catalytic activities. Involved in transcription regulation. Positively regulates CDKN1A/WAF1/CIP1 transcription in an SP1-dependent manner, hence inhibits cell growth. This function requires its ATPase, but not helicase activity. CDKN1A up-regulation may be cell-type specific. Binds CDH1/E-cadherin promoter and represses its transcription. Potentiates HNF4A-mediated MTTP transcriptional activation; this function requires ATPase, but not helicase activity. Facilitates HNF4A acetylation, possibly catalyzed by CREBBP/EP300, thereby increasing the DNA-binding affinity of HNF4 to its response element. In addition, disrupts the interaction between HNF4 and SHP that forms inactive heterodimers and enhances the formation of active HNF4 homodimers. By promoting HNF4A-induced MTTP expression, may play a role in lipid homeostasis. May positively regulate TP53 transcription. Associates with mRNPs, predominantly with spliced mRNAs carrying an exon junction complex (EJC). Involved in the regulation of translation initiation. Not involved in the general process of translation, but promotes efficient translation of selected complex mRNAs, containing highly structured 5'-untranslated regions (UTR). This function depends on helicase activity. Might facilitate translation by resolving secondary structures of 5'-UTRs during ribosome scanning. Alternatively, may act prior to 43S ribosomal scanning and promote 43S pre-initiation complex entry to mRNAs exhibiting specific RNA motifs, by performing local remodeling of transcript structures located close to the cap moiety. Independently of its ATPase activity, promotes the assembly of functional 80S ribosomes and disassembles from ribosomes prior to the translation elongation process. Positively regulates the translation of cyclin E1/CCNE1 mRNA and consequently promotes G1/S-phase transition during the cell cycle. May activate TP53 translation. Required for endoplasmic reticulum stress-induced ATF4 mRNA translation. Independently of its ATPase/helicase activity, enhances IRES-mediated translation; this activity requires interaction with EIF4E. Independently of its ATPase/helicase activity, has also been shown specifically repress cap-dependent translation, possibly by acting on translation initiation factor EIF4E. Involved in innate immunity, acting as a viral RNA sensor. Binds viral RNAs and promotes the production of type I interferon (IFN-alpha and IFN-beta). Potentiate MAVS/RIGI-mediated induction of IFNB in early stages of infection. Enhances IFNB1 expression via IRF3/IRF7 pathway and participates in NFKB activation in the presence of MAVS and TBK1. Involved in TBK1 and IKBKE-dependent IRF3 activation leading to IFNB induction, acts as a scaffolding adapter that links IKBKE and IRF3 and coordinates their activation. Involved in the TLR7/TLR8 signaling pathway leading to type I interferon induction, including IFNA4 production. In this context, acts as an upstream regulator of IRF7 activation by MAP3K14/NIK and CHUK/IKKA. Stimulates CHUK autophosphorylation and activation following physiological activation of the TLR7 and TLR8 pathways, leading to MAP3K14/CHUK-mediated activatory phosphorylation of IRF7. Also stimulates MAP3K14/CHUK-dependent NF-kappa-B signaling. Negatively regulates TNF-induced IL6 and IL8 expression, via the NF-kappa-B pathway. May act by interacting with RELA/p65 and trapping it in the cytoplasm. May also bind IFNB promoter; the function is independent of IRF3. Involved in both stress and inflammatory responses. Independently of its ATPase/helicase activity, required for efficient stress granule assembly through its interaction with EIF4E, hence promotes survival in stressed cells. Independently of its helicase activity, regulates NLRP3 inflammasome assembly through interaction with NLRP3 and hence promotes cell death by pyroptosis during inflammation. This function is independent of helicase activity. Therefore DDX3X availability may be used to interpret stress signals and choose between pro-survival stress granules and pyroptotic NLRP3 inflammasomes and serve as a live-or-die checkpoint in stressed cells. In association with GSK3A/B, negatively regulates extrinsic apoptotic signaling pathway via death domain receptors, including TNFRSF10B, slowing down the rate of CASP3 activation following death receptor stimulation. Cleavage by caspases may inactivate DDX3X and relieve the inhibition. Independently of its ATPase/helicase activity, allosteric activator of CSNK1E. Stimulates CSNK1E-mediated phosphorylation of DVL2, thereby involved in the positive regulation of Wnt/beta-catenin signaling pathway. Also activates CSNK1A1 and CSNK1D in vitro, but it is uncertain if these targets are physiologically relevant. ATPase and casein kinase-activating functions are mutually exclusive. May be involved in mitotic chromosome segregation. Its function is as follows. (Microbial infection) Facilitates hepatitis C virus (HCV) replication. During infection, HCV core protein inhibits the interaction between MAVS and DDX3X and therefore impairs MAVS-dependent INFB induction and might recruit DDX3X to HCV replication complex. In terms of biological role, (Microbial infection) Facilitates HIV-1 replication. Acts as a cofactor for XPO1-mediated nuclear export of HIV-1 Rev RNAs. This function is strongly stimulated in the presence of TBK1 and requires DDX3X ATPase activity. (Microbial infection) Facilitates Zika virus (ZIKV) replication. Functionally, (Microbial infection) Facilitates Dengue virus (DENV) replication. Its function is as follows. (Microbial infection) Facilitates Venezuelan equine encephalitis virus (VEEV) replication. This Homo sapiens (Human) protein is ATP-dependent RNA helicase DDX3X (DDX3X).